A 235-amino-acid chain; its full sequence is Sugar fermentation stimulation protein homolog (235 aa).

The protein belongs to the SfsA family.

This Azotobacter vinelandii (strain DJ / ATCC BAA-1303) protein is Sugar fermentation stimulation protein homolog.